Consider the following 289-residue polypeptide: Diaminopimelate epimerase (289 aa).

Positions 11 and 78 each coordinate substrate. Cysteine 87 serves as the catalytic Proton donor. Residues glycine 88–asparagine 89, asparagine 163, asparagine 199, and glutamate 217–arginine 218 contribute to the substrate site. The Proton acceptor role is filled by cysteine 226. Substrate is bound at residue glycine 227–threonine 228.

It belongs to the diaminopimelate epimerase family. As to quaternary structure, homodimer.

It is found in the cytoplasm. It catalyses the reaction (2S,6S)-2,6-diaminopimelate = meso-2,6-diaminopimelate. The protein operates within amino-acid biosynthesis; L-lysine biosynthesis via DAP pathway; DL-2,6-diaminopimelate from LL-2,6-diaminopimelate: step 1/1. In terms of biological role, catalyzes the stereoinversion of LL-2,6-diaminopimelate (L,L-DAP) to meso-diaminopimelate (meso-DAP), a precursor of L-lysine and an essential component of the bacterial peptidoglycan. This Mycolicibacterium gilvum (strain PYR-GCK) (Mycobacterium gilvum (strain PYR-GCK)) protein is Diaminopimelate epimerase.